Reading from the N-terminus, the 121-residue chain is MIQPQSFLNVADNSGARKLMCIRVLGGGNQSANIGNIIIAVVKDAIPNTAFKKSDIVRAVIVRTKKGIKRENGMTIRFDDNAAVVINKEGNPRGTRVFGPIARELRDQNLTKILSLAPEVV.

It belongs to the universal ribosomal protein uL14 family. Part of the 50S ribosomal subunit.

It is found in the plastid. Its subcellular location is the chloroplast. Its function is as follows. Binds to 23S rRNA. The sequence is that of Large ribosomal subunit protein uL14c from Oedogonium cardiacum (Filamentous green alga).